The chain runs to 242 residues: Small ribosomal subunit protein uS7m (242 aa).

The N-terminal 37 residues, 1-37 (MAAPTAKVSRGWSGLALGVRIAVLRLPGLTQVRWSRY), are a transit peptide targeting the mitochondrion. Lys228 carries the post-translational modification N6-acetyllysine.

It belongs to the universal ribosomal protein uS7 family. In terms of assembly, component of the mitochondrial ribosome small subunit (28S) which comprises a 12S rRNA and about 30 distinct proteins.

The protein localises to the mitochondrion. The chain is Small ribosomal subunit protein uS7m (MRPS7) from Bos taurus (Bovine).